Here is a 329-residue protein sequence, read N- to C-terminus: 4-hydroxythreonine-4-phosphate dehydrogenase (329 aa).

The substrate site is built by H136 and T137. H166, H211, and H266 together coordinate a divalent metal cation. 3 residues coordinate substrate: K274, N283, and R292.

This sequence belongs to the PdxA family. As to quaternary structure, homodimer. Zn(2+) serves as cofactor. Requires Mg(2+) as cofactor. Co(2+) is required as a cofactor.

Its subcellular location is the cytoplasm. The catalysed reaction is 4-(phosphooxy)-L-threonine + NAD(+) = 3-amino-2-oxopropyl phosphate + CO2 + NADH. Its pathway is cofactor biosynthesis; pyridoxine 5'-phosphate biosynthesis; pyridoxine 5'-phosphate from D-erythrose 4-phosphate: step 4/5. Catalyzes the NAD(P)-dependent oxidation of 4-(phosphooxy)-L-threonine (HTP) into 2-amino-3-oxo-4-(phosphooxy)butyric acid which spontaneously decarboxylates to form 3-amino-2-oxopropyl phosphate (AHAP). This chain is 4-hydroxythreonine-4-phosphate dehydrogenase, found in Neisseria meningitidis serogroup B (strain ATCC BAA-335 / MC58).